Consider the following 103-residue polypeptide: Large ribosomal subunit protein bL21 (103 aa).

It belongs to the bacterial ribosomal protein bL21 family. In terms of assembly, part of the 50S ribosomal subunit. Contacts protein L20.

Functionally, this protein binds to 23S rRNA in the presence of protein L20. The protein is Large ribosomal subunit protein bL21 of Acinetobacter baumannii (strain AB307-0294).